The sequence spans 495 residues: MSKYLLAIDQGTTSSRAIIFSAQGLPVARAQQEFKQYFPQDGWVEHDGQEIWLSTLKVCREAIASSGLQAEAIAAIGITNQRETTLVWDAASGTPIHLAIVWQDRRTADYCAGLKDAGHEAMVSAKTGLLIDPYFSATKLRWILENVPGARERAQRGELRFGTVDSFLLWRLTGGKVHRTDASNASRTLMFNIHTQQWDQDLLELFDIPASLLPEVLDCAAEFGHAEAELLGASIPVLGMAGDQQAALIGQACFEPGMVKSTYGTGCFMIQNTGDQPVSSKNRLLTTVGYRLGGKVTYAVEGSIFVAGAAVQWLRDGIKLISHARDSEALAEATGEACGVYLVPAFTGLGAPYWDPKARGAIFGLTRDTGIKEIVTAGLQSVCYQTRDLLEAMRQDGAAAPSALRVDGGMVENNWVMQFLADILGVSVERPEVTETTALGVAYLAGLQLGLYPDLQAIASHWHRQQRFEPRMSETHRERLYAGWLDAVKRVRSEG.

Residue Thr12 coordinates ADP. ATP contacts are provided by Thr12, Thr13, and Ser14. Thr12 provides a ligand contact to sn-glycerol 3-phosphate. Arg16 contributes to the ADP binding site. Positions 82, 83, 134, and 243 each coordinate sn-glycerol 3-phosphate. Glycerol-binding residues include Arg82, Glu83, Tyr134, Asp243, and Gln244. Thr265 and Gly308 together coordinate ADP. Positions 265, 308, 312, and 409 each coordinate ATP. The ADP site is built by Gly409 and Asn413.

The protein belongs to the FGGY kinase family.

It catalyses the reaction glycerol + ATP = sn-glycerol 3-phosphate + ADP + H(+). The protein operates within polyol metabolism; glycerol degradation via glycerol kinase pathway; sn-glycerol 3-phosphate from glycerol: step 1/1. With respect to regulation, inhibited by fructose 1,6-bisphosphate (FBP). Its function is as follows. Key enzyme in the regulation of glycerol uptake and metabolism. Catalyzes the phosphorylation of glycerol to yield sn-glycerol 3-phosphate. The sequence is that of Glycerol kinase from Ectopseudomonas mendocina (strain ymp) (Pseudomonas mendocina).